A 650-amino-acid polypeptide reads, in one-letter code: Chaperone protein DnaK (650 aa).

Thr200 is modified (phosphothreonine; by autocatalysis). Low complexity predominate over residues 611 to 636; that stretch reads AQQAGAAGAAGAAAEGASAQGGAQPA. The interval 611–650 is disordered; that stretch reads AQQAGAAGAAGAAAEGASAQGGAQPADDVVDADFKEVKKD.

It belongs to the heat shock protein 70 family.

In terms of biological role, acts as a chaperone. The polypeptide is Chaperone protein DnaK (Burkholderia mallei (strain NCTC 10247)).